The primary structure comprises 558 residues: MALKGQEDYIYLFKDSTHPVDFLDAFRTFYLDGLFTDITLQCPSGIIFHCHRAVLAACSNYFKAMFTADMKEKFKNKIKLSGIHHDILEGLVNYAYTSQIEITERNVQSLLEAADLLQFLSVKKACERFLVRHLDIDNCIGMHSFAEFHVCPELEKESRRILCSKFKEVWQQEEFLEISLEKFLFILSRKNLSVWKEEAIIEPVIKWTAHDVENRIECLCNLLSYINIDVDPVYLKTALGLQRSCLFTENKIRSLIYNALNPMHKEISQRSTATMYIIGGYYWHPLSEVHIWDPLTNVWIQGAEIPDYTRESYGVTCLGPNIYVTGGYRTDNIEALDTVWIYNSESDEWTEGLPTLNARYYHCAVTLGGCVYALGGYRKGAPAEEAEFYDPLKEKWIPIANMIKGVGNATACVLHDVIYVIGGHCGYRGSCTYDKVQSYNSDINEWSLITSSPHPEYGLCSVPLENKLYLVGGQTTITECYDPEQNEWREIAPMMERRMECGAVIMNGCIYVTGGYPYSKGTYLQSIEKYDPDLNKWEIVGNLPSAMRSHGCVCVYNV.

Residues 36–104 (TDITLQCPSG…AYTSQIEITE (69 aa)) enclose the BTB domain. One can recognise a BACK domain in the interval 139–240 (CIGMHSFAEF…DPVYLKTALG (102 aa)). 6 Kelch repeats span residues 274–320 (TMYI…CLGP), 321–369 (NIYV…TLGG), 370–416 (CVYA…VLHD), 418–466 (IYVI…PLEN), 467–508 (KLYL…IMNG), and 510–557 (IYVT…CVYN).

The protein is Kelch-like protein 23 (KLHL23) of Pongo abelii (Sumatran orangutan).